The following is a 66-amino-acid chain: Large ribosomal subunit protein bL35 (66 aa).

The tract at residues 21 to 40 (KIKSTQSAKRHGMTKRSKRS) is disordered. Residues 28–40 (AKRHGMTKRSKRS) are compositionally biased toward basic residues.

Belongs to the bacterial ribosomal protein bL35 family.

The chain is Large ribosomal subunit protein bL35 from Ehrlichia canis (strain Jake).